The following is a 1064-amino-acid chain: Carbamoyl phosphate synthase large chain (1064 aa).

The tract at residues 1-401 is carboxyphosphate synthetic domain; the sequence is MPKRADIKKI…ALMKAIRSLE (401 aa). ATP contacts are provided by Arg129, Arg169, Gly175, Gly176, Lys208, Ile210, Glu215, Gly241, Ile242, His243, Gln284, and Glu298. Positions 133-327 constitute an ATP-grasp 1 domain; that stretch reads KQLMEALKEP…IAKMAAKIAI (195 aa). Residues Gln284, Glu298, and Asn300 each contribute to the Mg(2+) site. The Mn(2+) site is built by Gln284, Glu298, and Asn300. The oligomerization domain stretch occupies residues 402–546; that stretch reads IGTFALDDLT…YSTYELENES (145 aa). Positions 547 to 929 are carbamoyl phosphate synthetic domain; it reads LKEKRPSVLV…ALYKAFVAAG (383 aa). Residues 671 to 861 form the ATP-grasp 2 domain; it reads NQVIKKLDLS…LAQLATRVML (191 aa). Positions 707, 746, 748, 752, 777, 778, 779, 780, 820, and 832 each coordinate ATP. The Mg(2+) site is built by Gln820, Glu832, and Asn834. The Mn(2+) site is built by Gln820, Glu832, and Asn834. Residues 930–1064 enclose the MGS-like domain; it reads FKVHEHGNVL…VSAINKGDKS (135 aa). The interval 930 to 1064 is allosteric domain; the sequence is FKVHEHGNVL…VSAINKGDKS (135 aa).

The protein belongs to the CarB family. In terms of assembly, composed of two chains; the small (or glutamine) chain promotes the hydrolysis of glutamine to ammonia, which is used by the large (or ammonia) chain to synthesize carbamoyl phosphate. Tetramer of heterodimers (alpha,beta)4. Mg(2+) serves as cofactor. Requires Mn(2+) as cofactor.

It carries out the reaction hydrogencarbonate + L-glutamine + 2 ATP + H2O = carbamoyl phosphate + L-glutamate + 2 ADP + phosphate + 2 H(+). The enzyme catalyses hydrogencarbonate + NH4(+) + 2 ATP = carbamoyl phosphate + 2 ADP + phosphate + 2 H(+). It participates in amino-acid biosynthesis; L-arginine biosynthesis; carbamoyl phosphate from bicarbonate: step 1/1. It functions in the pathway pyrimidine metabolism; UMP biosynthesis via de novo pathway; (S)-dihydroorotate from bicarbonate: step 1/3. Functionally, large subunit of the glutamine-dependent carbamoyl phosphate synthetase (CPSase). CPSase catalyzes the formation of carbamoyl phosphate from the ammonia moiety of glutamine, carbonate, and phosphate donated by ATP, constituting the first step of 2 biosynthetic pathways, one leading to arginine and/or urea and the other to pyrimidine nucleotides. The large subunit (synthetase) binds the substrates ammonia (free or transferred from glutamine from the small subunit), hydrogencarbonate and ATP and carries out an ATP-coupled ligase reaction, activating hydrogencarbonate by forming carboxy phosphate which reacts with ammonia to form carbamoyl phosphate. The protein is Carbamoyl phosphate synthase large chain of Oenococcus oeni (strain ATCC BAA-331 / PSU-1).